The following is a 362-amino-acid chain: Aminomethyltransferase (362 aa).

It belongs to the GcvT family. As to quaternary structure, the glycine cleavage system is composed of four proteins: P, T, L and H.

It catalyses the reaction N(6)-[(R)-S(8)-aminomethyldihydrolipoyl]-L-lysyl-[protein] + (6S)-5,6,7,8-tetrahydrofolate = N(6)-[(R)-dihydrolipoyl]-L-lysyl-[protein] + (6R)-5,10-methylene-5,6,7,8-tetrahydrofolate + NH4(+). Its function is as follows. The glycine cleavage system catalyzes the degradation of glycine. The protein is Aminomethyltransferase of Chloroherpeton thalassium (strain ATCC 35110 / GB-78).